A 365-amino-acid polypeptide reads, in one-letter code: WAT1-related protein At4g01430 (365 aa).

10 helical membrane-spanning segments follow: residues 7-27 (WAPV…NALV), 39-59 (IFGA…SYIW), 76-96 (FISG…GLSY), 100-120 (TVSM…ALIF), 132-152 (AGVL…LLTF), 183-203 (WLLG…WMLF), 216-236 (YSST…LSLY), 250-270 (FVIL…TVVT), 280-300 (VFVS…DFLI), and 305-325 (LYLG…VFLW). Residues 20-151 (MGSVNALVKK…ICIMGAMLLT (132 aa)) enclose the EamA 1 domain. Residues 216-324 (YSSTCLMSVF…VTITGLYVFL (109 aa)) form the EamA 2 domain. The segment at 339-365 (LNSSQFSQNKDNEDHTIANHKDTNLPV) is disordered. Over residues 348-365 (KDNEDHTIANHKDTNLPV) the composition is skewed to basic and acidic residues.

Belongs to the drug/metabolite transporter (DMT) superfamily. Plant drug/metabolite exporter (P-DME) (TC 2.A.7.4) family.

Its subcellular location is the membrane. The chain is WAT1-related protein At4g01430 from Arabidopsis thaliana (Mouse-ear cress).